Consider the following 121-residue polypeptide: UPF0045 protein sll0230 (121 aa).

The protein belongs to the UPF0045 family.

This Synechocystis sp. (strain ATCC 27184 / PCC 6803 / Kazusa) protein is UPF0045 protein sll0230.